Here is a 216-residue protein sequence, read N- to C-terminus: tRNA (guanine-N(7)-)-methyltransferase (216 aa).

S-adenosyl-L-methionine contacts are provided by Glu44, Glu69, Asn97, and Asp119. The active site involves Asp119. Substrate contacts are provided by residues Lys123, Asp155, and 192-195; that span reads TEYE.

Belongs to the class I-like SAM-binding methyltransferase superfamily. TrmB family.

It catalyses the reaction guanosine(46) in tRNA + S-adenosyl-L-methionine = N(7)-methylguanosine(46) in tRNA + S-adenosyl-L-homocysteine. It functions in the pathway tRNA modification; N(7)-methylguanine-tRNA biosynthesis. Its function is as follows. Catalyzes the formation of N(7)-methylguanine at position 46 (m7G46) in tRNA. The protein is tRNA (guanine-N(7)-)-methyltransferase of Lysinibacillus sphaericus (strain C3-41).